Here is a 476-residue protein sequence, read N- to C-terminus: Hyaluronidase-2 (476 aa).

An N-terminal signal peptide occupies residues 1–20 (MWTGLGPAVTLALVLVVAWA). Cystine bridges form between cysteine 47/cysteine 343 and cysteine 214/cysteine 230. N-linked (GlcNAc...) asparagine glycosylation is found at asparagine 77 and asparagine 106. Glutamate 138 functions as the Proton donor in the catalytic mechanism. N-linked (GlcNAc...) asparagine glycosylation is found at asparagine 340 and asparagine 360. Residues 364–442 (AAQYCSWAQC…YLGWGGEQCQ (79 aa)) enclose the EGF-like domain. 3 disulfide bridges follow: cysteine 368-cysteine 379, cysteine 373-cysteine 430, and cysteine 432-cysteine 441. A lipid anchor (GPI-anchor amidated glycine) is attached at glycine 451. The propeptide at 452–476 (ASGAWAGSHLTGLLAVAVLAFTWTS) is removed in mature form.

It belongs to the glycosyl hydrolase 56 family. In terms of assembly, interacts with MST1R. As to quaternary structure, (Microbial infection) Interacts with Jaagsiekte sheep retrovirus (JSRV) envelope proteins.

The protein localises to the cell membrane. The catalysed reaction is Random hydrolysis of (1-&gt;4)-linkages between N-acetyl-beta-D-glucosamine and D-glucuronate residues in hyaluronate.. Functionally, catalyzes hyaluronan degradation into small fragments that are endocytosed and degraded in lysosomes by HYAL1 and exoglycosidases. Essential for the breakdown of extracellular matrix hyaluronan. The protein is Hyaluronidase-2 (HYAL2) of Ovis aries (Sheep).